Consider the following 188-residue polypeptide: Large ribosomal subunit protein eL18 (188 aa).

Residues 147–188 (EAEKHFGPAPGVPHSHTKPYVRSKGRKFERARGRRASRAYKN) are disordered. Basic residues-rich tracts occupy residues 161-171 (SHTKPYVRSKG) and 178-188 (RGRRASRAYKN).

This sequence belongs to the eukaryotic ribosomal protein eL18 family.

The protein resides in the cytoplasm. The chain is Large ribosomal subunit protein eL18 (rpl-18) from Caenorhabditis elegans.